Here is a 494-residue protein sequence, read N- to C-terminus: Guanosine-5'-triphosphate,3'-diphosphate pyrophosphatase (494 aa).

This sequence belongs to the GppA/Ppx family. GppA subfamily.

It carries out the reaction guanosine 3'-diphosphate 5'-triphosphate + H2O = guanosine 3',5'-bis(diphosphate) + phosphate + H(+). The protein operates within purine metabolism; ppGpp biosynthesis; ppGpp from GTP: step 2/2. Functionally, catalyzes the conversion of pppGpp to ppGpp. Guanosine pentaphosphate (pppGpp) is a cytoplasmic signaling molecule which together with ppGpp controls the 'stringent response', an adaptive process that allows bacteria to respond to amino acid starvation, resulting in the coordinated regulation of numerous cellular activities. This chain is Guanosine-5'-triphosphate,3'-diphosphate pyrophosphatase, found in Shigella flexneri.